Reading from the N-terminus, the 210-residue chain is Large ribosomal subunit protein uL5 (210 aa).

Positions 188-210 are disordered; it reads AKDDPKKAKTKRGPAYYAKKKKK. Over residues 195–210 the composition is skewed to basic residues; that stretch reads AKTKRGPAYYAKKKKK.

This sequence belongs to the universal ribosomal protein uL5 family. As to quaternary structure, part of the 50S ribosomal subunit; part of the 5S rRNA/L5/L18/L25 subcomplex. Contacts the 5S rRNA and the P site tRNA. Forms a bridge to the 30S subunit in the 70S ribosome.

In terms of biological role, this is one of the proteins that bind and probably mediate the attachment of the 5S RNA into the large ribosomal subunit, where it forms part of the central protuberance. In the 70S ribosome it contacts protein S13 of the 30S subunit (bridge B1b), connecting the 2 subunits; this bridge is implicated in subunit movement. Contacts the P site tRNA; the 5S rRNA and some of its associated proteins might help stabilize positioning of ribosome-bound tRNAs. This Cutibacterium acnes (strain DSM 16379 / KPA171202) (Propionibacterium acnes) protein is Large ribosomal subunit protein uL5.